A 300-amino-acid polypeptide reads, in one-letter code: 4-hydroxy-tetrahydrodipicolinate synthase (300 aa).

Thr-53 is a binding site for pyruvate. Residue Tyr-141 is the Proton donor/acceptor of the active site. The Schiff-base intermediate with substrate role is filled by Lys-169. Thr-211 provides a ligand contact to pyruvate.

Belongs to the DapA family. Homotetramer; dimer of dimers.

The protein localises to the cytoplasm. It catalyses the reaction L-aspartate 4-semialdehyde + pyruvate = (2S,4S)-4-hydroxy-2,3,4,5-tetrahydrodipicolinate + H2O + H(+). Its pathway is amino-acid biosynthesis; L-lysine biosynthesis via DAP pathway; (S)-tetrahydrodipicolinate from L-aspartate: step 3/4. In terms of biological role, catalyzes the condensation of (S)-aspartate-beta-semialdehyde [(S)-ASA] and pyruvate to 4-hydroxy-tetrahydrodipicolinate (HTPA). The polypeptide is 4-hydroxy-tetrahydrodipicolinate synthase (Rickettsia massiliae (strain Mtu5)).